The sequence spans 194 residues: MKLILASTSPYRKNILEKLCIPFSCASPSADETPMNNESANTLVARLAAEKALSVGVTQKGLIIGSDQVACVDGVILGKPGNKLKAFDQLTQLSGKTVTFFTGLSLLDSKTQRQETIVETFDVIFKSLSAKQISRYLELEEPYDCAGSFKSEGLGIALFSSLDGRDPNTLIGLPLIALVAMLKKFEIDVFEHMQ.

The active-site Proton acceptor is the aspartate 67.

Belongs to the Maf family. YceF subfamily. Requires a divalent metal cation as cofactor.

It localises to the cytoplasm. It carries out the reaction N(7)-methyl-GTP + H2O = N(7)-methyl-GMP + diphosphate + H(+). Functionally, nucleoside triphosphate pyrophosphatase that hydrolyzes 7-methyl-GTP (m(7)GTP). May have a dual role in cell division arrest and in preventing the incorporation of modified nucleotides into cellular nucleic acids. The chain is 7-methyl-GTP pyrophosphatase from Pseudoalteromonas atlantica (strain T6c / ATCC BAA-1087).